The following is a 179-amino-acid chain: Large ribosomal subunit protein uL5 (179 aa).

It belongs to the universal ribosomal protein uL5 family. Part of the 50S ribosomal subunit; part of the 5S rRNA/L5/L18/L25 subcomplex. Contacts the 5S rRNA and the P site tRNA. Forms a bridge to the 30S subunit in the 70S ribosome.

This is one of the proteins that bind and probably mediate the attachment of the 5S RNA into the large ribosomal subunit, where it forms part of the central protuberance. In the 70S ribosome it contacts protein S13 of the 30S subunit (bridge B1b), connecting the 2 subunits; this bridge is implicated in subunit movement. Contacts the P site tRNA; the 5S rRNA and some of its associated proteins might help stabilize positioning of ribosome-bound tRNAs. The chain is Large ribosomal subunit protein uL5 from Clostridium botulinum (strain Alaska E43 / Type E3).